An 89-amino-acid chain; its full sequence is Small ribosomal subunit protein uS15 (89 aa).

This sequence belongs to the universal ribosomal protein uS15 family. In terms of assembly, part of the 30S ribosomal subunit. Forms a bridge to the 50S subunit in the 70S ribosome, contacting the 23S rRNA.

In terms of biological role, one of the primary rRNA binding proteins, it binds directly to 16S rRNA where it helps nucleate assembly of the platform of the 30S subunit by binding and bridging several RNA helices of the 16S rRNA. Forms an intersubunit bridge (bridge B4) with the 23S rRNA of the 50S subunit in the ribosome. This Chromobacterium violaceum (strain ATCC 12472 / DSM 30191 / JCM 1249 / CCUG 213 / NBRC 12614 / NCIMB 9131 / NCTC 9757 / MK) protein is Small ribosomal subunit protein uS15.